A 271-amino-acid polypeptide reads, in one-letter code: Protein ABHD14A (271 aa).

A helical; Signal-anchor for type II membrane protein transmembrane segment spans residues 35–55 (VALLGLSLLLMLLLYVGLPGP). Asparagine 67 carries an N-linked (GlcNAc...) asparagine glycan. The active-site Charge relay system is serine 171. Asparagine 201 carries N-linked (GlcNAc...) asparagine glycosylation. Residues aspartate 222 and histidine 249 each act as charge relay system in the active site.

The protein belongs to the AB hydrolase superfamily. ABHD14 family.

It localises to the cytoplasm. The protein localises to the membrane. Its function is as follows. Possible role in granule neuron development. This chain is Protein ABHD14A, found in Homo sapiens (Human).